A 447-amino-acid chain; its full sequence is Serine/threonine-protein phosphatase 2A 55 kDa regulatory subunit B delta isoform (447 aa).

7 WD repeats span residues 26 to 65 (AEADIISTVEFNCSGELLATGDKGGRVVIFQREQENKSRP), 91 to 132 (EIEE…KRVE), 175 to 213 (AHTYHINSISVNSDHQTYLSADDLRVNLWHLEITDRSFN), 224 to 264 (ELTE…LCDR), 283 to 321 (EIISSISDVKFSHSGRYMMTRDYLSVKVWDLNMESRPVE), 338 to 379 (ENDC…DITL), and 414 to 447 (DFNKKILHTAWHPTDNIIAVAATNNLYIFQDKVN).

It belongs to the phosphatase 2A regulatory subunit B family. As to quaternary structure, PP2A consists of a common heterodimeric core enzyme, composed of a 36 kDa catalytic subunit (subunit C) and a 65 kDa constant regulatory subunit (PR65 or subunit A), that associates with a variety of regulatory subunits. Proteins that associate with the core dimer include three families of regulatory subunits B (the R2/B/PR55/B55, R3/B''/PR72/PR130/PR59 and R5/B'/B56 families), the 48 kDa variable regulatory subunit, viral proteins, and cell signaling molecules. Interacts with ensa (when phosphorylated at 'Ser-67') and arpp19 (when phosphorylated at 'Ser-67'), leading to inhibit PP2A activity.

Its subcellular location is the cytoplasm. In terms of biological role, substrate-recognition subunit of protein phosphatase 2A (PP2A) that plays a key role in cell cycle by controlling mitosis entry and exit. The activity of PP2A complexes containing ppp2r2d (PR55-delta) fluctuate during the cell cycle: the activity is high in interphase and low in mitosis. During mitosis, activity of PP2A is inhibited via interaction with phosphorylated ensa and arpp19 inhibitors. PP2A complexes containing ppp2r2d (PR55-delta) also regulate the activity of TGF-beta/Activin/Nodal signaling by restricting receptor activity. Within the PP2A complexes, the B regulatory subunits modulate substrate selectivity and catalytic activity, and may also direct the localization of the catalytic enzyme to a particular subcellular compartment. The sequence is that of Serine/threonine-protein phosphatase 2A 55 kDa regulatory subunit B delta isoform (ppp2r2d) from Xenopus laevis (African clawed frog).